The sequence spans 475 residues: UDP-N-acetylmuramoylalanine--D-glutamate ligase (475 aa).

130 to 136 contacts ATP; the sequence is GTNGKTT.

It belongs to the MurCDEF family.

The protein resides in the cytoplasm. The enzyme catalyses UDP-N-acetyl-alpha-D-muramoyl-L-alanine + D-glutamate + ATP = UDP-N-acetyl-alpha-D-muramoyl-L-alanyl-D-glutamate + ADP + phosphate + H(+). Its pathway is cell wall biogenesis; peptidoglycan biosynthesis. Its function is as follows. Cell wall formation. Catalyzes the addition of glutamate to the nucleotide precursor UDP-N-acetylmuramoyl-L-alanine (UMA). The polypeptide is UDP-N-acetylmuramoylalanine--D-glutamate ligase (Corynebacterium efficiens (strain DSM 44549 / YS-314 / AJ 12310 / JCM 11189 / NBRC 100395)).